Consider the following 379-residue polypeptide: Putative F-box protein At5g62660 (379 aa).

One can recognise an F-box domain in the interval 35–84 (ALVAPEIPLDLLIEILTKLPAKSLMRFKCVSKLWSSLIRSRFFSNCYLTV).

In Arabidopsis thaliana (Mouse-ear cress), this protein is Putative F-box protein At5g62660.